A 404-amino-acid chain; its full sequence is Cysteine desulfurase IscS (404 aa).

Pyridoxal 5'-phosphate is bound by residues Ala-75 to Thr-76, Asn-155, Gln-183, and Ser-203 to His-205. The residue at position 206 (Lys-206) is an N6-(pyridoxal phosphate)lysine. Pyridoxal 5'-phosphate is bound at residue Thr-243. The Cysteine persulfide intermediate role is filled by Cys-328. Cys-328 serves as a coordination point for [2Fe-2S] cluster.

Belongs to the class-V pyridoxal-phosphate-dependent aminotransferase family. NifS/IscS subfamily. As to quaternary structure, homodimer. Forms a heterotetramer with IscU, interacts with other sulfur acceptors. Pyridoxal 5'-phosphate serves as cofactor.

The protein resides in the cytoplasm. The enzyme catalyses (sulfur carrier)-H + L-cysteine = (sulfur carrier)-SH + L-alanine. The protein operates within cofactor biosynthesis; iron-sulfur cluster biosynthesis. Master enzyme that delivers sulfur to a number of partners involved in Fe-S cluster assembly, tRNA modification or cofactor biosynthesis. Catalyzes the removal of elemental sulfur atoms from cysteine to produce alanine. Functions as a sulfur delivery protein for Fe-S cluster synthesis onto IscU, an Fe-S scaffold assembly protein, as well as other S acceptor proteins. The protein is Cysteine desulfurase IscS of Serratia proteamaculans (strain 568).